We begin with the raw amino-acid sequence, 205 residues long: Proteasome subunit beta type-3 (205 aa).

Belongs to the peptidase T1B family. The 26S proteasome consists of a 20S proteasome core and two 19S regulatory subunits. The 20S proteasome core is composed of 28 subunits that are arranged in four stacked rings, resulting in a barrel-shaped structure. The two end rings are each formed by seven alpha subunits, and the two central rings are each formed by seven beta subunits. The catalytic chamber with the active sites is on the inside of the barrel.

The protein localises to the cytoplasm. Its subcellular location is the nucleus. In terms of biological role, non-catalytic component of the proteasome, a multicatalytic proteinase complex which is characterized by its ability to cleave peptides with Arg, Phe, Tyr, Leu, and Glu adjacent to the leaving group at neutral or slightly basic pH. The proteasome has an ATP-dependent proteolytic activity. The protein is Proteasome subunit beta type-3 (psmb3) of Oncorhynchus mykiss (Rainbow trout).